We begin with the raw amino-acid sequence, 215 residues long: MKTKFYDYQGEHLILYFAGWGTPPDAVNHLILPENHDLLICYDYQDLNLDFDLSAYRHIRLVAWSMGVWVAERVLQGIRLKSATAVNGTGLPCDDSFGIPYAIFKGTLENLTENTRLKFERRICGDKASFERYQLFPARPFDEIHQELTALFAMIQQDKRIDLIHWANAWVSSRDKIFTPANQHQYWALRCAVQEIEGEHYVFSRFTHWSALWDH.

This is an uncharacterized protein from Haemophilus influenzae (strain ATCC 51907 / DSM 11121 / KW20 / Rd).